Here is a 486-residue protein sequence, read N- to C-terminus: UDP-GalNAc:beta-1,3-N-acetylgalactosaminyltransferase 2 (486 aa).

Over 1–10 (MRHLLFLCPC) the chain is Cytoplasmic. A helical; Signal-anchor for type II membrane protein membrane pass occupies residues 11 to 31 (VIGVAFHLWLFNFSGLFSWFL). Residues 32-486 (VWSPHSYDIV…CGNPCACEDR (455 aa)) are Lumenal-facing. 2 N-linked (GlcNAc...) asparagine glycosylation sites follow: Asn103 and Asn160.

This sequence belongs to the glycosyltransferase 31 family.

It localises to the golgi apparatus membrane. The protein localises to the endoplasmic reticulum. The catalysed reaction is 3-O-(N-acetyl-beta-D-glucosaminyl-(1-&gt;4)-alpha-D-mannosyl)-L-threonyl-[protein] + UDP-N-acetyl-alpha-D-galactosamine = 3-O-[beta-D-GalNAc-(1-&gt;3)-beta-D-GlcNAc-(1-&gt;4)-alpha-D-Man]-L-Thr-[protein] + UDP + H(+). The protein operates within protein modification; protein glycosylation. Functionally, beta-1,3-N-acetylgalactosaminyltransferase that synthesizes a unique carbohydrate structure, GalNAc-beta-1-3GlcNAc, on N- and O-glycans. Has no galactose nor galactosaminyl transferase activity toward any acceptor substrate. Involved in alpha-dystroglycan (dag1) glycosylation. The sequence is that of UDP-GalNAc:beta-1,3-N-acetylgalactosaminyltransferase 2 (b3galnt2) from Xenopus laevis (African clawed frog).